The primary structure comprises 840 residues: Protein argonaute-2 (840 aa).

A PAZ domain is found at 210 to 329 (PVIEFVCEVL…LPLEVCNIVA (120 aa)). S368 is modified (phosphoserine). One can recognise a Piwi domain in the interval 498–799 (LVVVILPGKT…VAFRARYHLV (302 aa)). A divalent metal cation contacts are provided by D578 and D650. P681 is modified (4-hydroxyproline). An a divalent metal cation-binding site is contributed by H788. 4 positions are modified to phosphoserine: S805, S809, S812, and S815.

It belongs to the argonaute family. Ago subfamily. As to quaternary structure, interacts with DICER1 through its Piwi domain and with TARBP2 during assembly of the RNA-induced silencing complex (RISC). Together, DICER1, AGO2 and TARBP2 constitute the trimeric RISC loading complex (RLC), or micro-RNA (miRNA) loading complex (miRLC). Within the RLC/miRLC, DICER1 and TARBP2 are required to process precursor miRNAs (pre-miRNAs) to mature miRNAs and then load them onto AGO2. AGO2 bound to the mature miRNA constitutes the minimal RISC and may subsequently dissociate from DICER1 and TARBP2. Note however that the term RISC has also been used to describe the trimeric RLC/miRLC. The formation of RISC complexes containing siRNAs rather than miRNAs appears to occur independently of DICER1. Interacts with AGO1. Also interacts with DDB1, DDX5, DDX6, DDX20, DHX30, DHX36, DDX47, DHX9, ELAVL, FXR1, GEMIN4, HNRNPF, IGF2BP1, ILF3, IMP8, MATR3, PABPC1, PRMT5, P4HA1, P4HB, RBM4, SART3, TNRC6A, TNRC6B, UPF1 and YBX1. Interacts with the P-body components DCP1A and XRN1. Associates with polysomes and messenger ribonucleoproteins (mNRPs). Interacts with RBM4; the interaction is modulated under stress-induced conditions, occurs under both cell proliferation and differentiation conditions and in an RNA- and phosphorylation-independent manner. Interacts with LIMD1, WTIP and AJUBA. Interacts with TRIM71; the interaction increases in presence of RNA. Interacts with APOBEC3G in an RNA-dependent manner. Interacts with APOBEC3A, APOBEC3C, APOBEC3F and APOBEC3H. Interacts with DICER1, TARBP2, EIF6, MOV10 and RPL7A (60S ribosome subunit); they form a large RNA-induced silencing complex (RISC). Interacts with FMR1. Interacts with ZFP36. Interacts with RC3H1; the interaction is RNA independent. Found in a complex composed of AGO2, CHD7 and ARB2A. Interacts with SND1 and SYT11. Interacts with CLNK. Interacts with GARRE1. Post-translationally, hydroxylated. 4-hydroxylation appears to enhance protein stability but is not required for miRNA-binding or endonuclease activity. In terms of processing, ubiquitinated on surface-exposed lysines by a SCF-like E3 ubiquitin-protein ligase complex containing ZSWIM8 during target-directed microRNA degradation (TDMD), a process that mediates degradation of microRNAs (miRNAs). Ubiquitination by the SCF-like E3 ubiquitin-protein ligase complex containing ZSWIM8 leads to its subsequent degradation, thereby exposing miRNAs for degradation. ZSWIM8 recognizes and binds AGO2 when it is engaged with a TDMD target. Phosphorylation at Ser-368 by AKT3; leads to up-regulate translational repression of microRNA target and down-regulate endonucleolytic cleavage. Post-translationally, a phosphorylation cycle of C-terminal serine cluster (Ser-805-Ser-815) regulates the release of target mRNAs. Target-binding leads to phosphorylation of these residues by CSNK1A1, which reduces the affinity of AGO2 for mRNA and enables target release. The ANKRD52-PPP6C phosphatase complex dephosphorylates the residues, which primes AGO2 for binding a new target.

The protein resides in the cytoplasm. It is found in the P-body. The protein localises to the nucleus. It catalyses the reaction Endonucleolytic cleavage to 5'-phosphomonoester.. Its function is as follows. Required for RNA-mediated gene silencing (RNAi) by the RNA-induced silencing complex (RISC). The 'minimal RISC' appears to include AGO2 bound to a short guide RNA such as a microRNA (miRNA) or short interfering RNA (siRNA). These guide RNAs direct RISC to complementary mRNAs that are targets for RISC-mediated gene silencing. The precise mechanism of gene silencing depends on the degree of complementarity between the miRNA or siRNA and its target. Binding of RISC to a perfectly complementary mRNA generally results in silencing due to endonucleolytic cleavage of the mRNA specifically by AGO2. Binding of RISC to a partially complementary mRNA results in silencing through inhibition of translation, and this is independent of endonuclease activity. May inhibit translation initiation by binding to the 7-methylguanosine cap, thereby preventing the recruitment of the translation initiation factor eIF4-E. May also inhibit translation initiation via interaction with EIF6, which itself binds to the 60S ribosomal subunit and prevents its association with the 40S ribosomal subunit. The inhibition of translational initiation leads to the accumulation of the affected mRNA in cytoplasmic processing bodies (P-bodies), where mRNA degradation may subsequently occur. In some cases RISC-mediated translational repression is also observed for miRNAs that perfectly match the 3' untranslated region (3'-UTR). Can also up-regulate the translation of specific mRNAs under certain growth conditions. Binds to the AU element of the 3'-UTR of the TNF (TNF-alpha) mRNA and up-regulates translation under conditions of serum starvation. Also required for transcriptional gene silencing (TGS), in which short RNAs known as antigene RNAs or agRNAs direct the transcriptional repression of complementary promoter regions. The chain is Protein argonaute-2 (AGO2) from Oryctolagus cuniculus (Rabbit).